Here is a 131-residue protein sequence, read N- to C-terminus: Steroid Delta-isomerase (131 aa).

The active-site Proton donor is Y16. D40 acts as the Proton acceptor in catalysis. Substrate is bound at residue D103.

In terms of assembly, homodimer.

It carries out the reaction a 3-oxo-Delta(5)-steroid = a 3-oxo-Delta(4)-steroid. The chain is Steroid Delta-isomerase (ksi) from Pseudomonas putida (Arthrobacter siderocapsulatus).